A 26-amino-acid chain; its full sequence is KCCKKGGPRKCPPEGMTXFYERIFRI.

Glycosylated. Produced by the opercular gland in the gill cavity and secreted as part of the mucus cocoon.

The protein localises to the secreted. Functionally, exhibits antibacterial activity. May play a role in protection against parasite settlement. In Scarus vetula (Queen parrotfish), this protein is Mucus envelope protein.